The primary structure comprises 130 residues: Small ribosomal subunit protein uS9 (130 aa).

Belongs to the universal ribosomal protein uS9 family.

The sequence is that of Small ribosomal subunit protein uS9 from Shewanella loihica (strain ATCC BAA-1088 / PV-4).